The following is a 394-amino-acid chain: Flap endonuclease 1 (394 aa).

Residues 1–103 (MGIKSLYQII…GELAKRTMRK (103 aa)) are N-domain. Asp-34 is a binding site for Mg(2+). Arg-69 is a DNA binding site. Residue Asp-85 coordinates Mg(2+). A disordered region spans residues 102–123 (RKAEAQEAAEEAKETGTAEDVE). The interval 121-252 (DVEKFSRRTV…NTALKMIRDH (132 aa)) is I-domain. Mg(2+) is bound by residues Glu-157, Glu-159, Asp-178, and Asp-180. Glu-157 serves as a coordination point for DNA. DNA is bound by residues Gly-230 and Asp-232. Mg(2+) is bound at residue Asp-232. The interval 340-348 (QQSRLEGFF) is interaction with PCNA. The tract at residues 349–394 (KPVAKTEQQKATAKRKAEEKAELAKKKKKEDAKAKRAMGAKPRGAR) is disordered. The span at 363–382 (RKAEEKAELAKKKKKEDAKA) shows a compositional bias: basic and acidic residues. Basic residues predominate over residues 383–394 (KRAMGAKPRGAR).

Belongs to the XPG/RAD2 endonuclease family. FEN1 subfamily. In terms of assembly, interacts with PCNA. Three molecules of FEN1 bind to one PCNA trimer with each molecule binding to one PCNA monomer. PCNA stimulates the nuclease activity without altering cleavage specificity. Mg(2+) serves as cofactor. Post-translationally, phosphorylated. Phosphorylation upon DNA damage induces relocalization to the nuclear plasma.

Its subcellular location is the nucleus. The protein resides in the nucleolus. It is found in the nucleoplasm. The protein localises to the mitochondrion. Functionally, structure-specific nuclease with 5'-flap endonuclease and 5'-3' exonuclease activities involved in DNA replication and repair. During DNA replication, cleaves the 5'-overhanging flap structure that is generated by displacement synthesis when DNA polymerase encounters the 5'-end of a downstream Okazaki fragment. It enters the flap from the 5'-end and then tracks to cleave the flap base, leaving a nick for ligation. Also involved in the long patch base excision repair (LP-BER) pathway, by cleaving within the apurinic/apyrimidinic (AP) site-terminated flap. Acts as a genome stabilization factor that prevents flaps from equilibrating into structures that lead to duplications and deletions. Also possesses 5'-3' exonuclease activity on nicked or gapped double-stranded DNA, and exhibits RNase H activity. Also involved in replication and repair of rDNA and in repairing mitochondrial DNA. In Arthroderma otae (strain ATCC MYA-4605 / CBS 113480) (Microsporum canis), this protein is Flap endonuclease 1.